Consider the following 486-residue polypeptide: Bile acid receptor (486 aa).

Lys-132 is covalently cross-linked (Glycyl lysine isopeptide (Lys-Gly) (interchain with G-Cter in SUMO1)). Positions Asp-134 to Thr-209 form a DNA-binding region, nuclear receptor. An NR C4-type zinc finger spans residues Cys-137–Cys-157. Residues Ser-145 and Ser-164 each carry the phosphoserine; by PKC/PRKCA modification. Lys-167 bears the N6-acetyllysine; by EP300 mark. The NR C4-type zinc-finger motif lies at Cys-173–Cys-197. At Lys-220 the chain carries N6-methyllysine; by SETD7. N6-acetyllysine; by EP300 is present on Lys-227. Positions Asp-262–Gln-486 constitute an NR LBD domain. A Glycyl lysine isopeptide (Lys-Gly) (interchain with G-Cter in SUMO1) cross-link involves residue Lys-289. The chenodeoxycholate site is built by Arg-345, Tyr-375, and Tyr-383. Thr-456 is subject to Phosphothreonine; by PKC/PRKCZ. Residue His-461 coordinates chenodeoxycholate.

The protein belongs to the nuclear hormone receptor family. NR1 subfamily. In terms of assembly, heterodimer (via C-terminus) with RXRA (via DBD); the heterodimerization enhances the binding affinity for LXXLL motifs from coactivators. Binds DNA predominantly as a heterodimer with RXRA. After activation by agonist binding interacts with coactivators. Interacts with NCOA1, NCOA2, PPARGC1A, CARM1, SETD7, PRMT1, GPS2, SMARCA4 and MED1. Interacts with EP300 and SMARCD1. Interacts with XRCC5 and XRCC6; decreasing NR1H4/FXR transactivation activity towards ABCB11/BSEP. Interacts with PAGR1 and NCOA6; indicative for an association with an MLL2/MLL3 complex (ASCOM). Acetylated by EP300. Lys-227 as is the major acetylation site for EP300; the dynamicly regulated acetylation inhibits heterodimerization with RXRA and transactivation activity. Deacetylated by SIRT1. In terms of processing, methylation may increase transactivation of target genes. Post-translationally, phosphorylation by PKC/PRKCA increases transactivation activity by promoting association with PPARGC1A. Sumoylated upon ligand binding. Liver and hepatocyte-related cells express mainly FXRalpha1-type isoforms with isoform 3 and isoform 4 in approximately equal proportions. In intestine and kidney mainly FXRalpha2-type isoforms are expressed with isoform 1 and isoform 2 in approximately equal proportions. Expressed in pancreatic beta cells and macrophages.

The protein resides in the nucleus. Ligand-activated transcription factor. Receptor for bile acids (BAs) such as chenodeoxycholic acid (CDCA), lithocholic acid, deoxycholic acid (DCA) and allocholic acid (ACA). Plays a essential role in BA homeostasis through the regulation of genes involved in BA synthesis, conjugation and enterohepatic circulation. Also regulates lipid and glucose homeostasis and is involved innate immune response. The FXR-RXR heterodimer binds predominantly to farnesoid X receptor response elements (FXREs) containing two inverted repeats of the consensus sequence 5'-AGGTCA-3' in which the monomers are spaced by 1 nucleotide (IR-1) but also to tandem repeat DR1 sites with lower affinity, and can be activated by either FXR or RXR-specific ligands. It is proposed that monomeric nuclear receptors such as NR5A2/LRH-1 bound to coregulatory nuclear responsive element (NRE) halfsites located in close proximity to FXREs modulate transcriptional activity. In the liver activates transcription of the corepressor NR0B2 thereby indirectly inhibiting CYP7A1 and CYP8B1 (involved in BA synthesis) implicating at least in part histone demethylase KDM1A resulting in epigenomic repression, and SLC10A1/NTCP (involved in hepatic uptake of conjugated BAs). Activates transcription of the repressor MAFG (involved in regulation of BA synthesis). Activates transcription of SLC27A5/BACS and BAAT (involved in BA conjugation), ABCB11/BSEP (involved in bile salt export) by directly recruiting histone methyltransferase CARM1, and ABCC2/MRP2 (involved in secretion of conjugated BAs) and ABCB4 (involved in secretion of phosphatidylcholine in the small intestine). Activates transcription of SLC27A5/BACS and BAAT (involved in BA conjugation), ABCB11/BSEP (involved in bile salt export) by directly recruiting histone methyltransferase CARM1, and ABCC2/MRP2 (involved in secretion of conjugated BAs) and ABCB4 (involved in secretion of phosphatidylcholine in the small intestine). In the intestine activates FGF19 expression and secretion leading to hepatic CYP7A1 repression. The function also involves the coordinated induction of hepatic KLB/beta-klotho expression. Regulates transcription of liver UGT2B4 and SULT2A1 involved in BA detoxification; binding to the UGT2B4 promoter seems to imply a monomeric transactivation independent of RXRA. Modulates lipid homeostasis by activating liver NR0B2/SHP-mediated repression of SREBF1 (involved in de novo lipogenesis), expression of PLTP (involved in HDL formation), SCARB1 (involved in HDL hepatic uptake), APOE, APOC1, APOC4, PPARA (involved in beta-oxidation of fatty acids), VLDLR and SDC1 (involved in the hepatic uptake of LDL and IDL remnants), and inhibiting expression of MTTP (involved in VLDL assembly. Increases expression of APOC2 (promoting lipoprotein lipase activity implicated in triglyceride clearance). Transrepresses APOA1 involving a monomeric competition with NR2A1 for binding to a DR1 element. Also reduces triglyceride clearance by inhibiting expression of ANGPTL3 and APOC3 (both involved in inhibition of lipoprotein lipase). Involved in glucose homeostasis by modulating hepatic gluconeogenesis through activation of NR0B2/SHP-mediated repression of respective genes. Modulates glycogen synthesis (inducing phosphorylation of glycogen synthase kinase-3). Modulates glucose-stimulated insulin secretion and is involved in insulin resistance. Involved in intestinal innate immunity. Plays a role in protecting the distal small intestine against bacterial overgrowth and preservation of the epithelial barrier. Down-regulates inflammatory cytokine expression in several types of immune cells including macrophages and mononuclear cells. Mediates trans-repression of TLR4-induced cytokine expression; the function seems to require its sumoylation and prevents N-CoR nuclear receptor corepressor clearance from target genes such as IL1B and NOS2. Involved in the TLR9-mediated protective mechanism in intestinal inflammation. Plays an anti-inflammatory role in liver inflammation; proposed to inhibit pro-inflammatory (but not antiapoptotic) NF-kappa-B signaling). Functionally, promotes transcriptional activation of target genes NR0B2/SHP (inducible by unconjugated CDCA), SLC51B/OSTB (inducible by unconjugated CDCA and DCA) and FABP6/IBAP; low activity for ABCB11/BSEP (inducible by unconjugated CDCA, DCA and ACA); not inducible by taurine- and glycine-amidated CDCA. Its function is as follows. Promotes transcriptional activation of target genes ABCB11/BSEP (inducible by unconjugated CDCA, DCA and ACA), NR0B2/SHP (inducible by unconjugated CDCA DCA and ACA), SLC51B/OSTB (inducible by unconjugated CDCA and DCA) and FABP6/IBAP; not inducible by taurine- and glycine-amidated CDCA. In terms of biological role, promotes transcriptional activation of target genes NR0B2/SHP (inducible by unconjugated CDCA), SLC51B/OSTB (inducible by unconjugated CDCA and DCA) and IBAP; low activity for ABCB11/BSEP (inducible by unconjugated CDCA, DCA and ACA); not inducible by taurine- and glycine-amidated CDCA. Promotes transcriptional activation of target genes ABCB11/BSEP (inducible by unconjugated CDCA, ACA and DCA), NR0B2/SHP (inducible by unconjugated CDCA, ACA and DCA), SLC51B/OSTB (inducible by unconjugated CDCA and DCA) and FABP6/IBAP; most efficient isoform compared to isoforms 1 to 3; not inducible by taurine- and glycine-amidated CDCA. The chain is Bile acid receptor (NR1H4) from Homo sapiens (Human).